Consider the following 144-residue polypeptide: Heme transporter hrg1-B (144 aa).

The next 4 membrane-spanning stretches (helical) occupy residues 6-26 (IYISVGYSTFGMLVGFSAFIV), 38-58 (AMGGLSGVLALWALVTHIMYI), 71-91 (FFMFVSSVFSLLAVAAFATFI), and 107-127 (FYLSAVWSFMTLKWAFLLGLY). A Di-leucine motif motif is present at residues 140–141 (IL).

It belongs to the HRG family.

Its subcellular location is the endosome membrane. The protein resides in the lysosome membrane. It localises to the cytoplasmic vesicle. It is found in the phagosome membrane. The catalysed reaction is heme b(in) = heme b(out). Functionally, heme transporter that regulates intracellular heme availability through the endosomal or lysosomal compartment. In macrophages, is the heme transporter for heme-iron recycling. Essential for macrophage iron homeostasis, transports heme from the phagolysosome to the cytoplasm during erythrophagocytosis (EP). This chain is Heme transporter hrg1-B (slc48a1a), found in Danio rerio (Zebrafish).